The chain runs to 344 residues: Uroporphyrinogen decarboxylase (344 aa).

Residues 25-29 (RQAGR), Asp75, Tyr152, Ser207, and His323 contribute to the substrate site.

It belongs to the uroporphyrinogen decarboxylase family. Homodimer.

The protein localises to the cytoplasm. It catalyses the reaction uroporphyrinogen III + 4 H(+) = coproporphyrinogen III + 4 CO2. It participates in porphyrin-containing compound metabolism; protoporphyrin-IX biosynthesis; coproporphyrinogen-III from 5-aminolevulinate: step 4/4. In terms of biological role, catalyzes the decarboxylation of four acetate groups of uroporphyrinogen-III to yield coproporphyrinogen-III. In Roseobacter denitrificans (strain ATCC 33942 / OCh 114) (Erythrobacter sp. (strain OCh 114)), this protein is Uroporphyrinogen decarboxylase.